A 451-amino-acid chain; its full sequence is Tubulin gamma-2 chain (451 aa).

Phosphoserine; by BRSK1 is present on Ser-131. Position 142–148 (142–148 (AGGTGSG)) interacts with GTP.

Belongs to the tubulin family. As to quaternary structure, component of the gamma-tubulin ring complex (gTuRC) consisting of TUBGCP2, TUBGCP3, TUBGCP4, TUBGCP5 and TUBGCP6 and gamma-tubulin TUBG1 or TUBG2. TUBGCP2, TUBGCP3, TUBGCP4, TUBGCP5 and TUBGCP6 assemble in a 5:5:2:1:1 stoichiometry; each is associated with a gamma-tubulin, thereby arranging 14 gamma-tubulins in a helical manner. Gamma-tubulin at the first position is blocked by TUBGCP3 at the last position, allowing 13 protafilaments to grow into a microtubule. Interacts with alpha-beta tubulin heterodimers; the interaction allows microtubules to nucleate from the gTuRC. In terms of processing, phosphorylation at Ser-131 by BRSK1 regulates centrosome duplication, possibly by mediating relocation of gamma-tubulin and its associated proteins from the cytoplasm to the centrosome.

It is found in the cytoplasm. Its subcellular location is the cytoskeleton. The protein localises to the microtubule organizing center. The protein resides in the centrosome. Its function is as follows. Tubulin is the major constituent of microtubules, protein filaments consisting of alpha- and beta-tubulin heterodimers. Gamma-tubulin is a key component of the gamma-tubulin ring complex (gTuRC) which mediates microtubule nucleation. The gTuRC regulates the minus-end nucleation of alpha-beta tubulin heterodimers that grow into microtubule protafilaments, a critical step in centrosome duplication and spindle formation. The sequence is that of Tubulin gamma-2 chain (Tubg2) from Mus musculus (Mouse).